Here is a 150-residue protein sequence, read N- to C-terminus: D-aminoacyl-tRNA deacylase (150 aa).

Residues 138–139 (GP) carry the Gly-cisPro motif, important for rejection of L-amino acids motif.

It belongs to the DTD family. As to quaternary structure, homodimer.

The protein localises to the cytoplasm. The enzyme catalyses glycyl-tRNA(Ala) + H2O = tRNA(Ala) + glycine + H(+). It carries out the reaction a D-aminoacyl-tRNA + H2O = a tRNA + a D-alpha-amino acid + H(+). Functionally, an aminoacyl-tRNA editing enzyme that deacylates mischarged D-aminoacyl-tRNAs. Also deacylates mischarged glycyl-tRNA(Ala), protecting cells against glycine mischarging by AlaRS. Acts via tRNA-based rather than protein-based catalysis; rejects L-amino acids rather than detecting D-amino acids in the active site. By recycling D-aminoacyl-tRNA to D-amino acids and free tRNA molecules, this enzyme counteracts the toxicity associated with the formation of D-aminoacyl-tRNA entities in vivo and helps enforce protein L-homochirality. This Cytophaga hutchinsonii (strain ATCC 33406 / DSM 1761 / CIP 103989 / NBRC 15051 / NCIMB 9469 / D465) protein is D-aminoacyl-tRNA deacylase.